The primary structure comprises 296 residues: Phosphoribosylaminoimidazole-succinocarboxamide synthase (296 aa).

The protein belongs to the SAICAR synthetase family.

It catalyses the reaction 5-amino-1-(5-phospho-D-ribosyl)imidazole-4-carboxylate + L-aspartate + ATP = (2S)-2-[5-amino-1-(5-phospho-beta-D-ribosyl)imidazole-4-carboxamido]succinate + ADP + phosphate + 2 H(+). It functions in the pathway purine metabolism; IMP biosynthesis via de novo pathway; 5-amino-1-(5-phospho-D-ribosyl)imidazole-4-carboxamide from 5-amino-1-(5-phospho-D-ribosyl)imidazole-4-carboxylate: step 1/2. The protein is Phosphoribosylaminoimidazole-succinocarboxamide synthase of Syntrophotalea carbinolica (strain DSM 2380 / NBRC 103641 / GraBd1) (Pelobacter carbinolicus).